A 193-amino-acid chain; its full sequence is ATP-dependent Clp protease proteolytic subunit 2 (193 aa).

Residue Ser-98 is the Nucleophile of the active site. Residue His-123 is part of the active site.

Belongs to the peptidase S14 family. As to quaternary structure, fourteen ClpP subunits assemble into 2 heptameric rings which stack back to back to give a disk-like structure with a central cavity, resembling the structure of eukaryotic proteasomes.

It is found in the cytoplasm. The catalysed reaction is Hydrolysis of proteins to small peptides in the presence of ATP and magnesium. alpha-casein is the usual test substrate. In the absence of ATP, only oligopeptides shorter than five residues are hydrolyzed (such as succinyl-Leu-Tyr-|-NHMec, and Leu-Tyr-Leu-|-Tyr-Trp, in which cleavage of the -Tyr-|-Leu- and -Tyr-|-Trp bonds also occurs).. Its function is as follows. Cleaves peptides in various proteins in a process that requires ATP hydrolysis. Has a chymotrypsin-like activity. Plays a major role in the degradation of misfolded proteins. The protein is ATP-dependent Clp protease proteolytic subunit 2 of Bacillus cereus (strain ATCC 10987 / NRS 248).